The sequence spans 414 residues: Serine hydroxymethyltransferase (414 aa).

Residues L118 and 122 to 124 (GHL) each bind (6S)-5,6,7,8-tetrahydrofolate. At K227 the chain carries N6-(pyridoxal phosphate)lysine. Residues E240 and 350–352 (SPF) each bind (6S)-5,6,7,8-tetrahydrofolate.

It belongs to the SHMT family. Homodimer. The cofactor is pyridoxal 5'-phosphate.

The protein localises to the cytoplasm. The catalysed reaction is (6R)-5,10-methylene-5,6,7,8-tetrahydrofolate + glycine + H2O = (6S)-5,6,7,8-tetrahydrofolate + L-serine. It functions in the pathway one-carbon metabolism; tetrahydrofolate interconversion. The protein operates within amino-acid biosynthesis; glycine biosynthesis; glycine from L-serine: step 1/1. Catalyzes the reversible interconversion of serine and glycine with tetrahydrofolate (THF) serving as the one-carbon carrier. This reaction serves as the major source of one-carbon groups required for the biosynthesis of purines, thymidylate, methionine, and other important biomolecules. Also exhibits THF-independent aldolase activity toward beta-hydroxyamino acids, producing glycine and aldehydes, via a retro-aldol mechanism. The protein is Serine hydroxymethyltransferase of Bacillus cereus (strain ZK / E33L).